We begin with the raw amino-acid sequence, 598 residues long: MAKEVIIGIDLGTTNSVVSIVDNGSPVVLENLNGKRTTPSVVSFKDGEIIVGDNAKNQIETNPDTVASIKRLMGTSKTVHVNNKDYKPEEISAMILEHLKKYAEEKIGHKVEKAVITVPAYFDNAQREATKIAGKIAGLEVLRIINEPTAAALAFGLDKVKKEQKILVFDLGGGTFDVSILELAEGTFEVLSTAGDNRLGGDDWDNEIVKWLIDLIKKDYKTDVTNNKMAMARLKAAAEKAKIDLSSSQQATIMLPFLVMQQGSEPISVEATLRRSQFEEMTSHLVERCRKPIETALADAKIKISDLDDVILVGGSTRIPAVQQLVESILNKKANRSVNPDEVVAMGAAIQGAVLAGEIDDVLLVDVTPLTLGIETAGGIATPLIPRNTRIPITKSEVFTTFEDNQSEVTIRIVQGERPLASENKLLGQFNLGGIRVAPRGVPQIEVSFKIDANGITTVLAKDKDTNKEQSITIKNSSKLSESEIEEMIKDAEKNREADAKRAEEISTIIQAENLVNSLEKEMNDGNIVIPEEEKAKIADYIKEVKELINNKDVEQLKKKIDELNAAYNMAKSAAASSNKDDSLNNNSSSNNDEETFE.

T175 is modified (phosphothreonine; by autocatalysis). Residues 571-591 are compositionally biased toward low complexity; it reads AKSAAASSNKDDSLNNNSSSN. The interval 571 to 598 is disordered; that stretch reads AKSAAASSNKDDSLNNNSSSNNDEETFE.

This sequence belongs to the heat shock protein 70 family.

Functionally, acts as a chaperone. The protein is Chaperone protein DnaK of Mycoplasmopsis agalactiae (strain NCTC 10123 / CIP 59.7 / PG2) (Mycoplasma agalactiae).